The chain runs to 2517 residues: Cullin-9 (2517 aa).

Residue lysine 87 forms a Glycyl lysine isopeptide (Lys-Gly) (interchain with G-Cter in ubiquitin) linkage. The span at 276 to 288 (SPELGAGDQSSPC) shows a compositional bias: polar residues. Residues 276 to 296 (SPELGAGDQSSPCATREKSRG) form a disordered region. The region spanning 366–439 (RSEFSSRSGY…HWHMLEILGP (74 aa)) is the CPH domain. The span at 576 to 589 (SNEPSSSSTSRNHS) shows a compositional bias: low complexity. The segment at 576–639 (SNEPSSSSTS…TETPMAQSDS (64 aa)) is disordered. Residues 593 to 609 (DPEEESKSEASFSEEET) show a composition bias toward acidic residues. The segment covering 610–630 (ESLKAKAEAPKTEAEPTKTRT) has biased composition (basic and acidic residues). The residue at position 976 (serine 976) is a Phosphoserine. Residues 1143 to 1322 (PINIPFFDVF…RTCLFYTIRA (180 aa)) enclose the DOC domain. 1363–1370 (AAQALGKT) contacts ATP. Disordered stretches follow at residues 1432–1466 (VEPP…VLPS) and 1664–1685 (DEEE…AEKE). Residues 1433 to 1443 (EPPPGPSPEPS) show a composition bias toward pro residues. At serine 1457 the chain carries Phosphoserine. Residues 1649-1691 (LFQLQRLDKLFLEQEDEEEKRLEEEEEEEEEEEAEKELFIEDP) are a coiled coil. The span at 1664–1683 (DEEEKRLEEEEEEEEEEEAE) shows a compositional bias: acidic residues. A Glycyl lysine isopeptide (Lys-Gly) (interchain with G-Cter in NEDD8) cross-link involves residue lysine 1881. The interval 2066-2283 (RPDHCPVCVS…KDYYNCSAMV (218 aa)) is TRIAD supradomain. Residues cysteine 2070, cysteine 2073, cysteine 2088, histidine 2090, cysteine 2093, cysteine 2096, cysteine 2115, cysteine 2120, cysteine 2160, cysteine 2166, cysteine 2181, cysteine 2184, cysteine 2189, cysteine 2192, histidine 2198, cysteine 2203, cysteine 2236, and cysteine 2239 each contribute to the Zn(2+) site. The RING-type 1 zinc finger occupies 2070–2120 (CPVCVSPLGCDDDLPSLCCMHYCCKSCWNEYLTTRIEQNLVLNCTCPIADC). The IBR-type zinc-finger motif lies at 2140–2203 (SKYEKALLRG…FPEAHYPASC (64 aa)). Residues 2236-2265 (CPSCQAPIEKNEGCLHMTCAKCNHGFCWRC) form an RING-type 2; atypical zinc finger. Cysteine 2249 is a catalytic residue. Zn(2+) is bound by residues cysteine 2254, cysteine 2257, cysteine 2262, cysteine 2265, histidine 2273, and cysteine 2279. A coiled-coil region spans residues 2365–2385 (VEQQTENLELHTNALQILLEE). Residue serine 2436 is modified to Phosphoserine. The interval 2442 to 2517 (WEAKGPNMPG…EEEDEDEAYD (76 aa)) is disordered. Composition is skewed to acidic residues over residues 2461–2499 (EAEE…ENLD) and 2506–2517 (GDEEEDEDEAYD).

Belongs to the cullin family. In terms of assembly, component of the Cul9-RING complex consisting of CUL9 and RBX1; the CUL9-RBX1 complex is a heterododecamer composed of six CUL9 and six RBX1 protomers. Interacts (via C-terminal TRIAD/RBR supradomain) with E2 ubiquitin-conjugating enzyme UBE2L3. Interacts with CUL7; the interaction with the CUL7 component of the 3M complex leads to inhibition of CUL9 activity. The CUL7-CUL9 heterodimer seems to interact specifically with TP53, likely via the CPH domain. Forms a complex with p53/TP53 in the cytoplasm of unstressed cells. Interacts with UBCH7 and UBCH8. Autoubiquitinated by the CUL9-RBX1 complex at Lys-87. In terms of processing, neddylated. Neddylation is mediated by E1 enzyme UBA3-NAE1 complex and E2 enzyme UBE2F. Structural rearrangment of the C-terminal TRIAD/RBR supradomain may play a role in neddylation and deneddylation. In terms of tissue distribution, ubiquitously expressed in all tissues with highest expression in testis brain and kidney.

It localises to the cytoplasm. In terms of biological role, core component of a Cul9-RING ubiquitin-protein ligase complex composed of CUL9 and RBX1. The CUL9-RBX1 complex mediates ubiquitination and subsequent degradation of BIRC5 and is required to maintain microtubule dynamics and genome integrity. Acts downstream of the 3M complex, which inhibits the ubiquitination of BIRC5. The CUL9-RBX1 complex also mediates mono-ubiquitination of p53/TP53. Acts as a cytoplasmic anchor protein in p53/TP53-associated protein complex. Regulates the subcellular localization of p53/TP53 and its subsequent function. Ubiquitinates apurinic/apyrimidinic endodeoxyribonuclease APEX2. Ubiquitination by the CUL9-RBX1 complex is predominantly mediated by E2 ubiquitin-conjugating enzymes UBE2L3 and UBE2D2. The polypeptide is Cullin-9 (CUL9) (Homo sapiens (Human)).